The chain runs to 206 residues: Thiamine-phosphate synthase (206 aa).

Residues 33–37 and Asn65 each bind 4-amino-2-methyl-5-(diphosphooxymethyl)pyrimidine; that span reads QMRFK. Mg(2+) is bound by residues Asp66 and Asp85. Thr104 contacts 4-amino-2-methyl-5-(diphosphooxymethyl)pyrimidine. A 2-[(2R,5Z)-2-carboxy-4-methylthiazol-5(2H)-ylidene]ethyl phosphate-binding site is contributed by 130–132; that stretch reads TAT. A 4-amino-2-methyl-5-(diphosphooxymethyl)pyrimidine-binding site is contributed by Lys133. Position 166 (Gly166) interacts with 2-[(2R,5Z)-2-carboxy-4-methylthiazol-5(2H)-ylidene]ethyl phosphate.

This sequence belongs to the thiamine-phosphate synthase family. Mg(2+) is required as a cofactor.

The enzyme catalyses 2-[(2R,5Z)-2-carboxy-4-methylthiazol-5(2H)-ylidene]ethyl phosphate + 4-amino-2-methyl-5-(diphosphooxymethyl)pyrimidine + 2 H(+) = thiamine phosphate + CO2 + diphosphate. It catalyses the reaction 2-(2-carboxy-4-methylthiazol-5-yl)ethyl phosphate + 4-amino-2-methyl-5-(diphosphooxymethyl)pyrimidine + 2 H(+) = thiamine phosphate + CO2 + diphosphate. It carries out the reaction 4-methyl-5-(2-phosphooxyethyl)-thiazole + 4-amino-2-methyl-5-(diphosphooxymethyl)pyrimidine + H(+) = thiamine phosphate + diphosphate. It participates in cofactor biosynthesis; thiamine diphosphate biosynthesis; thiamine phosphate from 4-amino-2-methyl-5-diphosphomethylpyrimidine and 4-methyl-5-(2-phosphoethyl)-thiazole: step 1/1. Its function is as follows. Condenses 4-methyl-5-(beta-hydroxyethyl)thiazole monophosphate (THZ-P) and 2-methyl-4-amino-5-hydroxymethyl pyrimidine pyrophosphate (HMP-PP) to form thiamine monophosphate (TMP). In Flavobacterium psychrophilum (strain ATCC 49511 / DSM 21280 / CIP 103535 / JIP02/86), this protein is Thiamine-phosphate synthase.